Consider the following 156-residue polypeptide: Small ribosomal subunit protein uS7 (156 aa).

The protein belongs to the universal ribosomal protein uS7 family. As to quaternary structure, part of the 30S ribosomal subunit. Contacts proteins S9 and S11.

In terms of biological role, one of the primary rRNA binding proteins, it binds directly to 16S rRNA where it nucleates assembly of the head domain of the 30S subunit. Is located at the subunit interface close to the decoding center, probably blocks exit of the E-site tRNA. In Exiguobacterium sibiricum (strain DSM 17290 / CCUG 55495 / CIP 109462 / JCM 13490 / 255-15), this protein is Small ribosomal subunit protein uS7.